Reading from the N-terminus, the 308-residue chain is Protoheme IX farnesyltransferase (308 aa).

Helical transmembrane passes span 31-51 (VIEL…RGTV), 53-73 (PLLI…ANAL), 102-122 (NALV…WWTT), 124-144 (LLSG…YTLL), 149-169 (TSQN…IGWS), 170-190 (AVTG…FFWT), 240-260 (LALA…VWFL), and 288-308 (YLAV…PHLF).

The protein belongs to the UbiA prenyltransferase family. Protoheme IX farnesyltransferase subfamily.

Its subcellular location is the cell membrane. It carries out the reaction heme b + (2E,6E)-farnesyl diphosphate + H2O = Fe(II)-heme o + diphosphate. The protein operates within porphyrin-containing compound metabolism; heme O biosynthesis; heme O from protoheme: step 1/1. Functionally, converts heme B (protoheme IX) to heme O by substitution of the vinyl group on carbon 2 of heme B porphyrin ring with a hydroxyethyl farnesyl side group. The polypeptide is Protoheme IX farnesyltransferase (Mycobacterium avium (strain 104)).